We begin with the raw amino-acid sequence, 142 residues long: Ribosome-binding factor A (142 aa).

The segment covering 120-130 has biased composition (basic and acidic residues); that stretch reads EVRRDIDHAPA. Residues 120 to 142 are disordered; the sequence is EVRRDIDHAPAEDEFPTDGDDGQ. Over residues 131–142 the composition is skewed to acidic residues; that stretch reads EDEFPTDGDDGQ.

The protein belongs to the RbfA family. In terms of assembly, monomer. Binds 30S ribosomal subunits, but not 50S ribosomal subunits or 70S ribosomes.

The protein resides in the cytoplasm. In terms of biological role, one of several proteins that assist in the late maturation steps of the functional core of the 30S ribosomal subunit. Associates with free 30S ribosomal subunits (but not with 30S subunits that are part of 70S ribosomes or polysomes). Required for efficient processing of 16S rRNA. May interact with the 5'-terminal helix region of 16S rRNA. The sequence is that of Ribosome-binding factor A from Paramagnetospirillum magneticum (strain ATCC 700264 / AMB-1) (Magnetospirillum magneticum).